A 517-amino-acid polypeptide reads, in one-letter code: Putative alpha-L-fucosidase 1 (517 aa).

Residues 1–20 (MATILLLLLGLLVGLPLLRA) form the signal peptide. 7 N-linked (GlcNAc...) asparagine glycosylation sites follow: Asn-119, Asn-249, Asn-296, Asn-321, Asn-352, Asn-496, and Asn-511.

Belongs to the glycosyl hydrolase 29 family.

The protein resides in the secreted. The protein localises to the extracellular space. It localises to the apoplast. It carries out the reaction an alpha-L-fucoside + H2O = L-fucose + an alcohol. Functionally, alpha-L-fucosidase is responsible for hydrolyzing the alpha-1,6-linked fucose joined to the reducing-end N-acetylglucosamine of the carbohydrate moieties of glycoproteins. Active only against 2'-fucosyl-lactitol when heterologously expressed. This chain is Putative alpha-L-fucosidase 1, found in Oryza sativa subsp. japonica (Rice).